A 174-amino-acid chain; its full sequence is Large ribosomal subunit protein uL10 (174 aa).

This sequence belongs to the universal ribosomal protein uL10 family. As to quaternary structure, part of the ribosomal stalk of the 50S ribosomal subunit. The N-terminus interacts with L11 and the large rRNA to form the base of the stalk. The C-terminus forms an elongated spine to which L12 dimers bind in a sequential fashion forming a multimeric L10(L12)X complex.

Functionally, forms part of the ribosomal stalk, playing a central role in the interaction of the ribosome with GTP-bound translation factors. The polypeptide is Large ribosomal subunit protein uL10 (Geobacter metallireducens (strain ATCC 53774 / DSM 7210 / GS-15)).